A 702-amino-acid polypeptide reads, in one-letter code: Ribosomal RNA large subunit methyltransferase K/L (702 aa).

Residues 43–154 (LVYQSLMWSR…KETASIALDL (112 aa)) enclose the THUMP domain.

The protein belongs to the methyltransferase superfamily. RlmKL family.

It is found in the cytoplasm. The enzyme catalyses guanosine(2445) in 23S rRNA + S-adenosyl-L-methionine = N(2)-methylguanosine(2445) in 23S rRNA + S-adenosyl-L-homocysteine + H(+). It catalyses the reaction guanosine(2069) in 23S rRNA + S-adenosyl-L-methionine = N(2)-methylguanosine(2069) in 23S rRNA + S-adenosyl-L-homocysteine + H(+). Its function is as follows. Specifically methylates the guanine in position 2445 (m2G2445) and the guanine in position 2069 (m7G2069) of 23S rRNA. The protein is Ribosomal RNA large subunit methyltransferase K/L of Escherichia coli O6:H1 (strain CFT073 / ATCC 700928 / UPEC).